A 130-amino-acid chain; its full sequence is Small ribosomal subunit protein uS11 (130 aa).

The protein belongs to the universal ribosomal protein uS11 family. As to quaternary structure, part of the 30S ribosomal subunit. Interacts with proteins S7 and S18. Binds to IF-3.

In terms of biological role, located on the platform of the 30S subunit, it bridges several disparate RNA helices of the 16S rRNA. Forms part of the Shine-Dalgarno cleft in the 70S ribosome. This is Small ribosomal subunit protein uS11 from Parasynechococcus marenigrum (strain WH8102).